The chain runs to 274 residues: NH(3)-dependent NAD(+) synthetase (274 aa).

46-53 (GISGGQDS) contacts ATP. Residue Asp52 coordinates Mg(2+). Arg140 is a deamido-NAD(+) binding site. Thr160 contributes to the ATP binding site. Position 165 (Glu165) interacts with Mg(2+). Deamido-NAD(+) contacts are provided by Lys173 and Asp180. Residues Lys189 and Thr211 each coordinate ATP. 260–261 (HK) contributes to the deamido-NAD(+) binding site.

This sequence belongs to the NAD synthetase family. In terms of assembly, homodimer.

The enzyme catalyses deamido-NAD(+) + NH4(+) + ATP = AMP + diphosphate + NAD(+) + H(+). It participates in cofactor biosynthesis; NAD(+) biosynthesis; NAD(+) from deamido-NAD(+) (ammonia route): step 1/1. Catalyzes the ATP-dependent amidation of deamido-NAD to form NAD. Uses ammonia as a nitrogen source. The polypeptide is NH(3)-dependent NAD(+) synthetase (Streptococcus pneumoniae (strain 70585)).